The sequence spans 364 residues: Capsular polysaccharide phosphotransferase fcs1 (364 aa).

Belongs to the stealth family.

Its function is as follows. Part of a group II capsule biosynthesis locus. The polypeptide is Capsular polysaccharide phosphotransferase fcs1 (fcs1) (Haemophilus influenzae).